We begin with the raw amino-acid sequence, 221 residues long: NIP3 homolog (221 aa).

Positions 24–55 are disordered; that stretch reads GEKTDESVQPQQQTEQSSAQQTTPSAKAVSNP. Lysine 26 is covalently cross-linked (Glycyl lysine isopeptide (Lys-Gly) (interchain with G-Cter in ubiquitin)). Over residues 32 to 49 the composition is skewed to low complexity; that stretch reads QPQQQTEQSSAQQTTPSA. Residues 189–209 form a helical membrane-spanning segment; it reads VVFGFLVTNIFSFVVGAAVGF. The tract at residues 189–209 is required for initiation of apoptosis; sequence VVFGFLVTNIFSFVVGAAVGF.

The protein belongs to the NIP3 family. As to quaternary structure, homodimer; via transmembrane domain. Interacts with ced-3 and ced-9. Ubiquitinated and degraded by the proteasome. Under oxidative stress conditions, ubiquitinated at Lys-26 in a pink-1 dependent manner. Colocalizes with pdr-1 and may be ubiquitinated by it. Expressed in all somatic tissues including neurons, pharynx, intestine, body wall muscles and vulva muscles.

It localises to the mitochondrion outer membrane. In terms of biological role, initiates apoptosis in a BH3-independent mechanism possibly by recruiting ced-3 to mitochondria and other cytoplasmic membranes. Has a role in lifespan and tumor growth. Required for the induction of mitophagy under stress conditions. This Caenorhabditis elegans protein is NIP3 homolog.